Consider the following 931-residue polypeptide: Protein translocase subunit SecA (931 aa).

Residues glutamine 87, 105–109, and aspartate 515 each bind ATP; that span reads GEGKT. Residues cysteine 915, cysteine 917, cysteine 926, and histidine 927 each contribute to the Zn(2+) site.

The protein belongs to the SecA family. In terms of assembly, monomer and homodimer. Part of the essential Sec protein translocation apparatus which comprises SecA, SecYEG and auxiliary proteins SecDF-YajC and YidC. It depends on Zn(2+) as a cofactor.

The protein resides in the cell inner membrane. Its subcellular location is the cytoplasm. It carries out the reaction ATP + H2O + cellular proteinSide 1 = ADP + phosphate + cellular proteinSide 2.. Functionally, part of the Sec protein translocase complex. Interacts with the SecYEG preprotein conducting channel. Has a central role in coupling the hydrolysis of ATP to the transfer of proteins into and across the cell membrane, serving both as a receptor for the preprotein-SecB complex and as an ATP-driven molecular motor driving the stepwise translocation of polypeptide chains across the membrane. The chain is Protein translocase subunit SecA from Burkholderia ambifaria (strain ATCC BAA-244 / DSM 16087 / CCUG 44356 / LMG 19182 / AMMD) (Burkholderia cepacia (strain AMMD)).